Reading from the N-terminus, the 607-residue chain is MTTPFDPSAFLSTCSGRPGVYRMFDSEARLLYVGKAKNLKNRLASYFRKSGLAPKTAALVARIAQVETTITANETEALLLEQTLIKEWRPPYNILLRDDKSYPYVFLSDGNFPRLSIHRGAKKQKGKYFGPYPSAGAIRESLSLLQKTFFVRQCEDSFYKNRTRPCLQYQIKRCKAPCVGLVDPAEYAEDVRHSVMFLEGRSNALTDELSGAMEQAASTLDFERAAELRDQISLLRRVQDQQSMEGGTGDVDVIAAFVNPGGACVHLISVRGGRVLGSKNFFPQTGIDEEVAEVMAAFLGQYYVSSPERDLPSELIVNVVHEDFPTLIEAIHELRGRELDISHRVRGTRARWQQLAVTNAEQALGARLANRQHVAARFDALAEVLNLDEPPQRLECYDISHSSGEATVASCVVFGPEGPIKSDYRRYNIEGVTAGDDYAAMHQALTRRFSKLKDGEGKLPDILLVDGGKGQLSMARDVLNELAVPDLILLGVAKGATRKAGFETLYLNDSAHEFTLKGDSPALHLIQQIRDEAHRFAITGHRARRGKTRRTSTLEGVAGVGPTRRRDLLKHFGGLQELSRASIDEIAKAPGISKKLAELIYANLHSE.

The GIY-YIG domain occupies 16-94 (GRPGVYRMFD…IKEWRPPYNI (79 aa)). The UVR domain occupies 203-238 (NALTDELSGAMEQAASTLDFERAAELRDQISLLRRV).

It belongs to the UvrC family. Interacts with UvrB in an incision complex.

It localises to the cytoplasm. The UvrABC repair system catalyzes the recognition and processing of DNA lesions. UvrC both incises the 5' and 3' sides of the lesion. The N-terminal half is responsible for the 3' incision and the C-terminal half is responsible for the 5' incision. The protein is UvrABC system protein C of Pseudomonas fluorescens (strain SBW25).